A 1356-amino-acid chain; its full sequence is DNA-directed RNA polymerase subunit beta (1356 aa).

This sequence belongs to the RNA polymerase beta chain family. As to quaternary structure, the RNAP catalytic core consists of 2 alpha, 1 beta, 1 beta' and 1 omega subunit. When a sigma factor is associated with the core the holoenzyme is formed, which can initiate transcription.

It catalyses the reaction RNA(n) + a ribonucleoside 5'-triphosphate = RNA(n+1) + diphosphate. Its function is as follows. DNA-dependent RNA polymerase catalyzes the transcription of DNA into RNA using the four ribonucleoside triphosphates as substrates. This is DNA-directed RNA polymerase subunit beta from Stutzerimonas stutzeri (strain A1501) (Pseudomonas stutzeri).